The chain runs to 207 residues: Guanylate kinase (207 aa).

The Guanylate kinase-like domain maps to 6 to 185 (GLLIVLSGPS…AKNRIQCIVE (180 aa)). Residue 13–20 (GPSGVGKG) participates in ATP binding.

The protein belongs to the guanylate kinase family.

It localises to the cytoplasm. It catalyses the reaction GMP + ATP = GDP + ADP. Essential for recycling GMP and indirectly, cGMP. In Staphylococcus aureus (strain USA300), this protein is Guanylate kinase.